The sequence spans 906 residues: UPF0182 protein CA_C0010 (906 aa).

7 helical membrane passes run 7-29 (IVTIILFLLVIVGSFGKVTDFII), 47-69 (LAAILKLMIPIFIIIYTGLWFYY), 96-118 (VAIVIDVIASFFVAYFTSSVYWY), 153-175 (LYGVMLLFLIFMAVLTVILYIVL), 208-230 (FAIISGLIMFLVAVGYAIRSFNL), 250-272 (LVFYVIIIAAAIVSSVVIFTSII), and 279-301 (IFVSIVAILILIIGQSITAEIVQ). Residues 842–862 (NSSNNQSETRTETGGTSTDSS) are compositionally biased toward low complexity. Residues 842-875 (NSSNNQSETRTETGGTSTDSSNNKDKLKQAQDLY) are disordered.

The protein belongs to the UPF0182 family.

The protein resides in the cell membrane. In Clostridium acetobutylicum (strain ATCC 824 / DSM 792 / JCM 1419 / IAM 19013 / LMG 5710 / NBRC 13948 / NRRL B-527 / VKM B-1787 / 2291 / W), this protein is UPF0182 protein CA_C0010.